The primary structure comprises 204 residues: Urease accessory protein UreG (204 aa).

Gly-12–Thr-19 contributes to the GTP binding site.

It belongs to the SIMIBI class G3E GTPase family. UreG subfamily. Homodimer. UreD, UreF and UreG form a complex that acts as a GTP-hydrolysis-dependent molecular chaperone, activating the urease apoprotein by helping to assemble the nickel containing metallocenter of UreC. The UreE protein probably delivers the nickel.

It is found in the cytoplasm. In terms of biological role, facilitates the functional incorporation of the urease nickel metallocenter. This process requires GTP hydrolysis, probably effectuated by UreG. In Streptococcus salivarius (strain 57.I), this protein is Urease accessory protein UreG.